A 729-amino-acid polypeptide reads, in one-letter code: Monosaccharide-sensing protein 2 (729 aa).

The next 6 membrane-spanning stretches (helical) occupy residues 1 to 21 (MSGAVLVAIAAAVGNLLQGWD), 47 to 67 (LIVAMSLIGATLITTCSGGVA), 81 to 101 (ILYFVGSLVMLWSPNVYVLLL), 104 to 124 (LLDGFGVGLVVTLVPIYISET), 139 to 159 (FTGSGGMFLSYCMVFGMSLMP), and 165 to 185 (LMLGVLFIPSLVFFFLTVFFL). Over residues 347 to 363 (VGEGEDYPSDHGDDSED) the composition is skewed to acidic residues. Disordered regions lie at residues 347–367 (VGEGEDYPSDHGDDSEDDLHS) and 423–442 (EREDESGQKEEGFPGSRRGS). Over residues 423-434 (EREDESGQKEEG) the composition is skewed to basic and acidic residues. Ser438 and Gly448 each carry phosphoserine. 6 helical membrane passes run 507 to 527 (ALVVGVGLQILQQFSGINGVL), 553 to 573 (ASLLISALTTFVMLPAIAVAM), 585 to 605 (LLTTIPILIASLLVLVISNLV), 610 to 630 (IVHAVLSTVSVVLYFCFFVMG), 650 to 670 (ICIAICALTFWICDIIVTYSL), and 679 to 699 (LAGVFGMYAIVCCISWVFVFI).

The protein belongs to the major facilitator superfamily. Sugar transporter (TC 2.A.1.1) family. As to expression, mostly expressed in roots and stems, and, to a lower extent, in juvenile and adult leaves, and in flower tissues.

The protein localises to the vacuole membrane. It catalyses the reaction D-glucose(out) + H(+)(in) = D-glucose(in) + H(+)(out). The enzyme catalyses sucrose(out) + H(+)(in) = sucrose(in) + H(+)(out). Its function is as follows. Sugar proton-coupled antiporter which contributes to vacuolar sugar import (e.g. monosaccharides including glucose, sucrose and fructose), particularly during stress responses (e.g. in response to cold). This is Monosaccharide-sensing protein 2 from Arabidopsis thaliana (Mouse-ear cress).